A 66-amino-acid polypeptide reads, in one-letter code: Small ribosomal subunit protein eS27 (66 aa).

Residues cysteine 21, cysteine 24, cysteine 40, and cysteine 43 each coordinate Zn(2+). A C4-type zinc finger spans residues 21 to 43; that stretch reads CPNCGNEQTIFSHATFPVRCLSC.

It belongs to the eukaryotic ribosomal protein eS27 family. Part of the 30S ribosomal subunit. Zn(2+) is required as a cofactor.

The sequence is that of Small ribosomal subunit protein eS27 from Saccharolobus solfataricus (strain ATCC 35092 / DSM 1617 / JCM 11322 / P2) (Sulfolobus solfataricus).